The following is a 307-amino-acid chain: UDP-N-acetylenolpyruvoylglucosamine reductase (307 aa).

In terms of domain architecture, FAD-binding PCMH-type spans 29–197; sequence RVGGPAEWFA…LSARFRLDPG (169 aa). The active site involves R176. Catalysis depends on S227, which acts as the Proton donor. Residue E297 is part of the active site.

It belongs to the MurB family. Requires FAD as cofactor.

The protein localises to the cytoplasm. It catalyses the reaction UDP-N-acetyl-alpha-D-muramate + NADP(+) = UDP-N-acetyl-3-O-(1-carboxyvinyl)-alpha-D-glucosamine + NADPH + H(+). The protein operates within cell wall biogenesis; peptidoglycan biosynthesis. Functionally, cell wall formation. In Prochlorococcus marinus (strain MIT 9313), this protein is UDP-N-acetylenolpyruvoylglucosamine reductase.